The sequence spans 214 residues: Adenylate kinase (214 aa).

ATP is bound at residue 10-15 (GAGKGT). Residues 30–59 (STGDMLRAAVKAGTPLGLEAKKVMDAGQLV) are NMP. AMP is bound by residues T31, R36, 57-59 (QLV), 85-88 (GFPR), and Q92. Residues 122–159 (GRRVHPGSGRVYHVVFNPPKVEGKDDVTGEDLAIRPDD) are LID. ATP is bound by residues R123 and 132-133 (VY). The AMP site is built by R156 and R167. Q200 lines the ATP pocket.

Belongs to the adenylate kinase family. Monomer.

The protein localises to the cytoplasm. The catalysed reaction is AMP + ATP = 2 ADP. Its pathway is purine metabolism; AMP biosynthesis via salvage pathway; AMP from ADP: step 1/1. Its function is as follows. Catalyzes the reversible transfer of the terminal phosphate group between ATP and AMP. Plays an important role in cellular energy homeostasis and in adenine nucleotide metabolism. The protein is Adenylate kinase of Shewanella oneidensis (strain ATCC 700550 / JCM 31522 / CIP 106686 / LMG 19005 / NCIMB 14063 / MR-1).